Here is a 72-residue protein sequence, read N- to C-terminus: uncharacterized protein (72 aa).

Positions 15-62 (NNNYNNNNNNNNNNNNNNNNNNNNNNNNNNININNNNNNNNNNNNNNN) are disordered.

This is an uncharacterized protein from Dictyostelium discoideum (Social amoeba).